Here is an 816-residue protein sequence, read N- to C-terminus: Leucine--tRNA ligase (816 aa).

Residues 40-51 carry the 'HIGH' region motif; that stretch reads SYPSGSQLHAGH. Positions 576 to 580 match the 'KMSKS' region motif; that stretch reads KMSKS. ATP is bound at residue lysine 579.

It belongs to the class-I aminoacyl-tRNA synthetase family.

It is found in the cytoplasm. The enzyme catalyses tRNA(Leu) + L-leucine + ATP = L-leucyl-tRNA(Leu) + AMP + diphosphate. This chain is Leucine--tRNA ligase, found in Clostridium perfringens (strain ATCC 13124 / DSM 756 / JCM 1290 / NCIMB 6125 / NCTC 8237 / Type A).